Reading from the N-terminus, the 64-residue chain is Copper-specific metallothionein-2 (64 aa).

16 residues coordinate Cu(+): cysteine 3, cysteine 5, cysteine 9, cysteine 11, cysteine 16, cysteine 18, cysteine 22, cysteine 24, cysteine 27, cysteine 33, cysteine 40, cysteine 44, cysteine 50, cysteine 52, cysteine 56, and cysteine 58.

This sequence belongs to the metallothionein superfamily. Type 2 family.

Its function is as follows. The metallothioneins are involved in the cellular sequestration of toxic metal ions and regulation of essential trace elements. This isoform binds exclusively copper. This is Copper-specific metallothionein-2 from Callinectes sapidus (Blue crab).